A 446-amino-acid polypeptide reads, in one-letter code: Tetratricopeptide repeat protein 23 (446 aa).

TPR repeat units lie at residues 45 to 78, 137 to 170, 186 to 219, and 356 to 389; these read LHLC…TKIC, LELF…SKEM, SRIK…TETT, and AETY…ETFL.

In terms of assembly, associated with the EvC complex composed of EFCAB7, IQCE, EVC2 and EVC.

It is found in the cell projection. It localises to the cilium. Participates positively in the ciliary Hedgehog (Hh) signaling. The sequence is that of Tetratricopeptide repeat protein 23 (Ttc23) from Rattus norvegicus (Rat).